The chain runs to 284 residues: Pseudouridine-5'-phosphate glycosidase (284 aa).

Glu-17 functions as the Proton donor in the catalytic mechanism. The substrate site is built by Lys-77 and Val-97. A Mn(2+)-binding site is contributed by Asp-126. Position 128 to 130 (128 to 130) interacts with substrate; it reads SQD. The active-site Nucleophile is Lys-147.

This sequence belongs to the pseudouridine-5'-phosphate glycosidase family. In terms of assembly, homotrimer. Mn(2+) is required as a cofactor.

It carries out the reaction D-ribose 5-phosphate + uracil = psi-UMP + H2O. Its function is as follows. Catalyzes the reversible cleavage of pseudouridine 5'-phosphate (PsiMP) to ribose 5-phosphate and uracil. Functions biologically in the cleavage direction, as part of a pseudouridine degradation pathway. This is Pseudouridine-5'-phosphate glycosidase from Thermotoga petrophila (strain ATCC BAA-488 / DSM 13995 / JCM 10881 / RKU-1).